Reading from the N-terminus, the 258-residue chain is Acetylglutamate kinase (258 aa).

Substrate-binding positions include 44–45, R66, and N158; that span reads GG. ATP is bound by residues 181-186 and 209-211; these read DVSGIL and IIT.

Belongs to the acetylglutamate kinase family. ArgB subfamily. In terms of assembly, homodimer.

The protein resides in the cytoplasm. The catalysed reaction is N-acetyl-L-glutamate + ATP = N-acetyl-L-glutamyl 5-phosphate + ADP. Its pathway is amino-acid biosynthesis; L-arginine biosynthesis; N(2)-acetyl-L-ornithine from L-glutamate: step 2/4. Catalyzes the ATP-dependent phosphorylation of N-acetyl-L-glutamate. The protein is Acetylglutamate kinase of Klebsiella pneumoniae subsp. pneumoniae (strain ATCC 700721 / MGH 78578).